Consider the following 107-residue polypeptide: Large ribosomal subunit protein uL24 (107 aa).

Belongs to the universal ribosomal protein uL24 family. In terms of assembly, part of the 50S ribosomal subunit.

Functionally, one of two assembly initiator proteins, it binds directly to the 5'-end of the 23S rRNA, where it nucleates assembly of the 50S subunit. One of the proteins that surrounds the polypeptide exit tunnel on the outside of the subunit. This Thermotoga neapolitana (strain ATCC 49049 / DSM 4359 / NBRC 107923 / NS-E) protein is Large ribosomal subunit protein uL24.